A 138-amino-acid polypeptide reads, in one-letter code: Transcription factor Atoh7-b (138 aa).

Residues 33–85 form the bHLH domain; that stretch reads KRRLAANARERRRMQGLNTAFDSLRKVVPQWGEDKKLSKYETLQMALSYIMAL.

The protein resides in the nucleus. The protein localises to the perikaryon. It localises to the cell projection. It is found in the axon. Functionally, transcription factor that binds to DNA at the consensus sequence 5'-CAG[GC]TG-3'. Positively regulates the determination of retinal ganglion cell fate and formation of the optic nerve and retino-hypothalamic tract. Required for retinal circadian rhythm photoentrainment. Plays a role in brainstem auditory signaling and binaural processing. Regulates the differentiation of olfactory receptor neurons. During retinal neurogenesis, activates the transcription of several genes such as brn3d, coe3, cbfa2t2, glis2, elrC and xgadd45-gamma. In Xenopus laevis (African clawed frog), this protein is Transcription factor Atoh7-b.